A 438-amino-acid chain; its full sequence is Trigger factor (438 aa).

In terms of domain architecture, PPIase FKBP-type spans 160–245; that stretch reads DDKVTIDFVG…VKKIQQAELP (86 aa).

This sequence belongs to the FKBP-type PPIase family. Tig subfamily.

The protein resides in the cytoplasm. It carries out the reaction [protein]-peptidylproline (omega=180) = [protein]-peptidylproline (omega=0). Involved in protein export. Acts as a chaperone by maintaining the newly synthesized protein in an open conformation. Functions as a peptidyl-prolyl cis-trans isomerase. This chain is Trigger factor, found in Francisella tularensis subsp. holarctica (strain LVS).